The chain runs to 438 residues: 23S rRNA (uracil(1939)-C(5))-methyltransferase RlmD (438 aa).

Residues 9-68 (RRTVNRHIITVTADNLDAQGQGVARHQGKTIFVAGLLPGEQAQVQLTEEKRQFAKAKLVK) form the TRAM domain. The [4Fe-4S] cluster site is built by cysteine 81, cysteine 87, cysteine 90, and cysteine 168. The S-adenosyl-L-methionine site is built by glutamine 272, phenylalanine 301, asparagine 306, glutamate 322, asparagine 349, and aspartate 370. Residue cysteine 396 is the Nucleophile of the active site.

This sequence belongs to the class I-like SAM-binding methyltransferase superfamily. RNA M5U methyltransferase family. RlmD subfamily.

It catalyses the reaction uridine(1939) in 23S rRNA + S-adenosyl-L-methionine = 5-methyluridine(1939) in 23S rRNA + S-adenosyl-L-homocysteine + H(+). Functionally, catalyzes the formation of 5-methyl-uridine at position 1939 (m5U1939) in 23S rRNA. The sequence is that of 23S rRNA (uracil(1939)-C(5))-methyltransferase RlmD from Photorhabdus laumondii subsp. laumondii (strain DSM 15139 / CIP 105565 / TT01) (Photorhabdus luminescens subsp. laumondii).